The chain runs to 205 residues: High frequency lysogenization protein HflD homolog (205 aa).

This sequence belongs to the HflD family.

It is found in the cytoplasm. Its subcellular location is the cell inner membrane. This Shewanella piezotolerans (strain WP3 / JCM 13877) protein is High frequency lysogenization protein HflD homolog.